A 188-amino-acid polypeptide reads, in one-letter code: Elongation factor P (188 aa).

The residue at position 34 (Lys34) is an N6-(3,6-diaminohexanoyl)-5-hydroxylysine.

It belongs to the elongation factor P family. Post-translationally, may be beta-lysylated on the epsilon-amino group of Lys-34 by the combined action of EpmA and EpmB, and then hydroxylated on the C5 position of the same residue by EpmC (if this protein is present). Lysylation is critical for the stimulatory effect of EF-P on peptide-bond formation. The lysylation moiety may extend toward the peptidyltransferase center and stabilize the terminal 3-CCA end of the tRNA. Hydroxylation of the C5 position on Lys-34 may allow additional potential stabilizing hydrogen-bond interactions with the P-tRNA.

Its subcellular location is the cytoplasm. It functions in the pathway protein biosynthesis; polypeptide chain elongation. Involved in peptide bond synthesis. Alleviates ribosome stalling that occurs when 3 or more consecutive Pro residues or the sequence PPG is present in a protein, possibly by augmenting the peptidyl transferase activity of the ribosome. Modification of Lys-34 is required for alleviation. This Vibrio parahaemolyticus serotype O3:K6 (strain RIMD 2210633) protein is Elongation factor P.